A 264-amino-acid chain; its full sequence is Granzyme K (264 aa).

The first 24 residues, 1 to 24, serve as a signal peptide directing secretion; it reads MTKFSSFSLFFLIVGAYMTHVCFN. The propeptide at 25-26 is activation peptide; the sequence is ME. The Peptidase S1 domain occupies 27–259; that stretch reads IIGGKEVSPH…YQTWIKSNLV (233 aa). Cys-52 and Cys-68 are disulfide-bonded. Active-site charge relay system residues include His-67 and Asp-116. 3 disulfide bridges follow: Cys-149–Cys-220, Cys-181–Cys-199, and Cys-210–Cys-234. Ser-214 (charge relay system) is an active-site residue.

This sequence belongs to the peptidase S1 family. Granzyme subfamily. In terms of tissue distribution, expressed in lung, spleen, thymus and peripheral blood leukocytes.

It localises to the secreted. The protein resides in the cytoplasmic granule. This is Granzyme K (GZMK) from Homo sapiens (Human).